The chain runs to 130 residues: Cytochrome b-c1 complex subunit 7 (130 aa).

This sequence belongs to the UQCRB/QCR7 family. As to quaternary structure, component of the ubiquinol-cytochrome c oxidoreductase (cytochrome b-c1 complex, complex III, CIII), a multisubunit enzyme composed of 3 respiratory subunits cytochrome b, cytochrome c1 and Rieske protein, 2 core protein subunits, and additional low-molecular weight protein subunits. The complex exists as an obligatory dimer and forms supercomplexes (SCs) in the inner mitochondrial membrane with cytochrome c oxidase (complex IV, CIV).

The protein resides in the mitochondrion inner membrane. In terms of biological role, component of the ubiquinol-cytochrome c oxidoreductase, a multisubunit transmembrane complex that is part of the mitochondrial electron transport chain which drives oxidative phosphorylation. The respiratory chain contains 3 multisubunit complexes succinate dehydrogenase (complex II, CII), ubiquinol-cytochrome c oxidoreductase (cytochrome b-c1 complex, complex III, CIII) and cytochrome c oxidase (complex IV, CIV), that cooperate to transfer electrons derived from NADH and succinate to molecular oxygen, creating an electrochemical gradient over the inner membrane that drives transmembrane transport and the ATP synthase. The cytochrome b-c1 complex catalyzes electron transfer from ubiquinol to cytochrome c, linking this redox reaction to translocation of protons across the mitochondrial inner membrane, with protons being carried across the membrane as hydrogens on the quinol. In the process called Q cycle, 2 protons are consumed from the matrix, 4 protons are released into the intermembrane space and 2 electrons are passed to cytochrome c. The sequence is that of Cytochrome b-c1 complex subunit 7 (UBCRBP) from Echinococcus multilocularis (Fox tapeworm).